The sequence spans 110 residues: Histone H2A.1 (110 aa).

The protein belongs to the histone H2A family. As to quaternary structure, the nucleosome is a histone octamer containing two molecules each of H2A, H2B, H3 and H4 assembled in one H3-H4 heterotetramer and two H2A-H2B heterodimers. The octamer wraps approximately 147 bp of DNA. As to expression, expressed in the generative cell within the bicellular pollen. Not detected in other reproductive or vegetative tissues.

The protein resides in the nucleus. The protein localises to the chromosome. Core component of nucleosome. Nucleosomes wrap and compact DNA into chromatin, limiting DNA accessibility to the cellular machineries which require DNA as a template. Histones thereby play a central role in transcription regulation, DNA repair, DNA replication and chromosomal stability. DNA accessibility is regulated via a complex set of post-translational modifications of histones, also called histone code, and nucleosome remodeling. The chain is Histone H2A.1 (gcH2A) from Lilium longiflorum (Trumpet lily).